Consider the following 467-residue polypeptide: Cysteine--tRNA ligase (467 aa).

C30 contributes to the Zn(2+) binding site. The short motif at 32-42 (PTVYDDSHLGH) is the 'HIGH' region element. Positions 209, 239, and 243 each coordinate Zn(2+). The 'KMSKS' region signature appears at 271–275 (KMSKS). Residue K274 participates in ATP binding.

The protein belongs to the class-I aminoacyl-tRNA synthetase family. As to quaternary structure, monomer. Requires Zn(2+) as cofactor.

The protein localises to the cytoplasm. The catalysed reaction is tRNA(Cys) + L-cysteine + ATP = L-cysteinyl-tRNA(Cys) + AMP + diphosphate. The chain is Cysteine--tRNA ligase from Aliarcobacter butzleri (strain RM4018) (Arcobacter butzleri).